Here is a 245-residue protein sequence, read N- to C-terminus: Eukaryotic translation initiation factor 4E type 2 (245 aa).

Residues 1–38 are compositionally biased toward basic and acidic residues; it reads MNNKFDALKDDDSGDHDQNEENSTQKDGEKEKTERDKN. The interval 1–52 is disordered; the sequence is MNNKFDALKDDDSGDHDQNEENSTQKDGEKEKTERDKNQSSSKRKAVVPGPA. A Phosphoserine modification is found at Ser13. The interval 54-57 is EIF4EBP1/2/3 binding; the sequence is HPLQ. 78-79 provides a ligand contact to mRNA; that stretch reads YE. Residues 95–99 are EIF4EBP1/2/3 binding; sequence WRFYS. Residues His110 and 124–125 contribute to the mRNA site; that span reads WE. Lys134 is subject to N6-acetyllysine; alternate. Residue Lys134 forms a Glycyl lysine isopeptide (Lys-Gly) (interchain with G-Cter in ISG15); alternate linkage. Positions 150-157 are EIF4EBP1/2/3 binding; it reads NLILAMLG. MRNA-binding positions include 174 to 179 and 222 to 224; these read RFQEDI and KMP. A Glycyl lysine isopeptide (Lys-Gly) (interchain with G-Cter in ISG15) cross-link involves residue Lys222.

The protein belongs to the eukaryotic initiation factor 4E family. Interacts with EIF4EBP1, EIF4EBP2 and EIF4EBP3. Does not interact with eIF4G (EIF4G1, EIF4G2 or EIF4G3). Component of the 4EHP-GYF2 complex, at least composed of EIF4E2, GIGYF2 and ZNF598. Interacts with GIGYF2 (via the 4EHP-binding motif); the interaction is direct. Interacts with EIF4ENIF1/4E-T (via YXXXXLphi motif); increasing affinity for the 7-methylguanosine-containing mRNA cap. Ubiquitinated by ARIH1. The consequences of ubiquitination are however unclear: according to a report, EIF4E2 ubiquitination leads to promote EIF4E2 cap-binding and protein translation arrest. According to another report ubiquitination leads to its subsequent degradation. Post-translationally, ISGylation enhances its cap structure-binding activity and translation-inhibition activity.

Its subcellular location is the cytoplasm. The protein resides in the P-body. Its function is as follows. Recognizes and binds the 7-methylguanosine-containing mRNA cap during an early step in the initiation. Acts as a repressor of translation initiation. In contrast to EIF4E, it is unable to bind eIF4G (EIF4G1, EIF4G2 or EIF4G3), suggesting that it acts by competing with EIF4E and block assembly of eIF4F at the cap. In P-bodies, component of a complex that promotes miRNA-mediated translational repression. Involved in virus-induced host response by mediating miRNA MIR34A-induced translational silencing which controls IFNB1 production by a negative feedback mechanism. Component of the 4EHP-GYF2 complex, a multiprotein complex that acts as a repressor of translation initiation. In association with GIGYF2, assists ribosome-associated quality control (RQC) by sequestering the mRNA cap, blocking ribosome initiation and decreasing the translational load on problematic messages. Part of a pathway that works in parallel to RQC-mediated degradation of the stalled nascent polypeptide. GIGYF2 and EIF4E2 work downstream and independently of ZNF598, which seems to work as a scaffold that can recruit them to faulty mRNA even if alternative recruitment mechanisms may exist. In terms of biological role, (Microbial infection) Upon SARS coronavirus-2/SARS-CoV-2 infection, the interaction with non-structural protein 2 (nsp2) with GIGYF2 enhances GIGYF2 binding to EIF4E2 and increases repression of translation initiation of genes involved in antiviral innate immune response such as IFNB1. The chain is Eukaryotic translation initiation factor 4E type 2 from Homo sapiens (Human).